The following is a 244-amino-acid chain: Tetraspanin-1 (244 aa).

Transmembrane regions (helical) follow at residues 11–31 (VLFFLDLAMLLAALALIAVGF), 67–87 (LIVVFWSIIGLSLGAVVTAVL), 104–124 (YLVLIIVLVSLEIGCGVAVLV), and 198–218 (ILLVILILQTIAIILPVPILI).

Belongs to the tetraspanin (TM4SF) family.

The protein localises to the membrane. The protein is Tetraspanin-1 (tsp-1) of Caenorhabditis elegans.